Reading from the N-terminus, the 333-residue chain is Probable tRNA pseudouridine synthase B (333 aa).

Asp66 (nucleophile) is an active-site residue. The region spanning 233-308 is the PUA domain; the sequence is LKKIIVKDSA…EVVEITRVIM (76 aa).

This sequence belongs to the pseudouridine synthase TruB family. Type 2 subfamily.

It catalyses the reaction uridine(55) in tRNA = pseudouridine(55) in tRNA. Could be responsible for synthesis of pseudouridine from uracil-55 in the psi GC loop of transfer RNAs. In Methanococcus maripaludis (strain C5 / ATCC BAA-1333), this protein is Probable tRNA pseudouridine synthase B.